The sequence spans 202 residues: Imidazoleglycerol-phosphate dehydratase (202 aa).

The protein belongs to the imidazoleglycerol-phosphate dehydratase family.

The protein resides in the cytoplasm. The catalysed reaction is D-erythro-1-(imidazol-4-yl)glycerol 3-phosphate = 3-(imidazol-4-yl)-2-oxopropyl phosphate + H2O. It functions in the pathway amino-acid biosynthesis; L-histidine biosynthesis; L-histidine from 5-phospho-alpha-D-ribose 1-diphosphate: step 6/9. This Rhizobium etli (strain CIAT 652) protein is Imidazoleglycerol-phosphate dehydratase.